The primary structure comprises 31 residues: Cyclotide cter-C (31 aa).

Positions 1-31 (GVPCAESCVWIPCTVTALLGCSCKDKVCYLD) form a cross-link, cyclopeptide (Gly-Asp). 3 cysteine pairs are disulfide-bonded: Cys4/Cys21, Cys8/Cys23, and Cys13/Cys28.

Contains 3 disulfide bonds. Post-translationally, this is a cyclic peptide.

Probably participates in a plant defense mechanism. The sequence is that of Cyclotide cter-C from Clitoria ternatea (Butterfly pea).